Reading from the N-terminus, the 487-residue chain is Glutamyl-tRNA(Gln) amidotransferase subunit A (487 aa).

Active-site charge relay system residues include lysine 75 and serine 150. The active-site Acyl-ester intermediate is the serine 174.

This sequence belongs to the amidase family. GatA subfamily. As to quaternary structure, heterotrimer of A, B and C subunits.

It catalyses the reaction L-glutamyl-tRNA(Gln) + L-glutamine + ATP + H2O = L-glutaminyl-tRNA(Gln) + L-glutamate + ADP + phosphate + H(+). Functionally, allows the formation of correctly charged Gln-tRNA(Gln) through the transamidation of misacylated Glu-tRNA(Gln) in organisms which lack glutaminyl-tRNA synthetase. The reaction takes place in the presence of glutamine and ATP through an activated gamma-phospho-Glu-tRNA(Gln). This is Glutamyl-tRNA(Gln) amidotransferase subunit A from Syntrophomonas wolfei subsp. wolfei (strain DSM 2245B / Goettingen).